A 222-amino-acid polypeptide reads, in one-letter code: Ribosomal RNA small subunit methyltransferase G (222 aa).

Residues Gly-84, Phe-89, 141–142 (VE), and Arg-154 each bind S-adenosyl-L-methionine.

Belongs to the methyltransferase superfamily. RNA methyltransferase RsmG family.

Its subcellular location is the cytoplasm. The catalysed reaction is guanosine(527) in 16S rRNA + S-adenosyl-L-methionine = N(7)-methylguanosine(527) in 16S rRNA + S-adenosyl-L-homocysteine. In terms of biological role, specifically methylates the N7 position of guanine in position 527 of 16S rRNA. The protein is Ribosomal RNA small subunit methyltransferase G of Bradyrhizobium sp. (strain ORS 278).